The primary structure comprises 427 residues: Glutamyl-tRNA(Gln) amidotransferase subunit D (427 aa).

The Asparaginase/glutaminase domain maps to 74-407 (ERVYIIGAGG…EVVRKMFQRN (334 aa)). Active-site residues include T84, T160, D161, and K240.

Belongs to the asparaginase 1 family. GatD subfamily. In terms of assembly, heterodimer of GatD and GatE.

It carries out the reaction L-glutamyl-tRNA(Gln) + L-glutamine + ATP + H2O = L-glutaminyl-tRNA(Gln) + L-glutamate + ADP + phosphate + H(+). Its function is as follows. Allows the formation of correctly charged Gln-tRNA(Gln) through the transamidation of misacylated Glu-tRNA(Gln) in organisms which lack glutaminyl-tRNA synthetase. The reaction takes place in the presence of glutamine and ATP through an activated gamma-phospho-Glu-tRNA(Gln). The GatDE system is specific for glutamate and does not act on aspartate. This Aeropyrum pernix (strain ATCC 700893 / DSM 11879 / JCM 9820 / NBRC 100138 / K1) protein is Glutamyl-tRNA(Gln) amidotransferase subunit D.